We begin with the raw amino-acid sequence, 782 residues long: DNA repair and recombination protein RAD54-like (782 aa).

Residues 1-20 (MRRSLAPSQRGGQRLSSRND) are compositionally biased toward polar residues. The tract at residues 1–28 (MRRSLAPSQRGGQRLSSRNDFTPPLLKK) is disordered. The interval 2–9 (RRSLAPSQ) is required for chromatin remodeling, strand pairing activities and coupling of ATPase activity. Thr-22 bears the Phosphothreonine mark. In terms of domain architecture, Helicase ATP-binding spans 168–343 (EGKRGNFNGC…FSLVNFVNPE (176 aa)). Residue 181–188 (DEMGLGKT) participates in ATP binding. The DEGH box signature appears at 294-297 (DEGH). The Helicase C-terminal domain occupies 501–658 (LLDFMLAAIR…NNESAEKHFT (158 aa)). Positions 741 to 753 (SQKIEATPATETS) are enriched in polar residues. The segment at 741–782 (SQKIEATPATETSVEAKLEPERRKRPAMPLSDDSADEDFQGF) is disordered. Acidic residues predominate over residues 773 to 782 (DSADEDFQGF).

It belongs to the SNF2/RAD54 helicase family. As to quaternary structure, interacts (via N-terminus) with spn-A/Rad51.

The protein localises to the nucleus. Its function is as follows. Involved in mitotic DNA repair and meiotic recombination. Functions in the recombinational DNA repair pathway. Essential for interhomolog gene conversion (GC), but may have a less important role in intersister GC than spn-A/Rad51. In the presence of DNA, spn-A/Rad51 enhances the ATPase activity of okr/Rad54. This Drosophila persimilis (Fruit fly) protein is DNA repair and recombination protein RAD54-like.